Reading from the N-terminus, the 156-residue chain is Small ribosomal subunit protein bS16 (156 aa).

The segment covering 124 to 135 has biased composition (low complexity); it reads AAKAAEAETPAE. The segment at 124–156 is disordered; it reads AAKAAEAETPAEVQHDDEKVELADVEESAPESV. A compositionally biased stretch (basic and acidic residues) spans 136 to 145; sequence VQHDDEKVEL. Residues 146–156 are compositionally biased toward acidic residues; it reads ADVEESAPESV.

The protein belongs to the bacterial ribosomal protein bS16 family.

The polypeptide is Small ribosomal subunit protein bS16 (Bifidobacterium animalis subsp. lactis (strain AD011)).